Here is a 158-residue protein sequence, read N- to C-terminus: Putative peptidoglycan-binding-like protein (158 aa).

The signal sequence occupies residues 1–24 (MRSPKVKFLTIFTFCIFITKMSFA).

It belongs to the IagB/IpgF/P19 family.

The protein localises to the periplasm. The polypeptide is Putative peptidoglycan-binding-like protein (pbl) (Escherichia coli (strain K12)).